The primary structure comprises 297 residues: Aspartate carbamoyltransferase catalytic subunit (297 aa).

Carbamoyl phosphate is bound by residues Arg48 and Thr49. Lys76 serves as a coordination point for L-aspartate. Arg98, His129, and Gln132 together coordinate carbamoyl phosphate. L-aspartate contacts are provided by Arg162 and Arg214. The carbamoyl phosphate site is built by Ala257 and Pro258.

It belongs to the aspartate/ornithine carbamoyltransferase superfamily. ATCase family. As to quaternary structure, heterododecamer (2C3:3R2) of six catalytic PyrB chains organized as two trimers (C3), and six regulatory PyrI chains organized as three dimers (R2).

The enzyme catalyses carbamoyl phosphate + L-aspartate = N-carbamoyl-L-aspartate + phosphate + H(+). Its pathway is pyrimidine metabolism; UMP biosynthesis via de novo pathway; (S)-dihydroorotate from bicarbonate: step 2/3. Catalyzes the condensation of carbamoyl phosphate and aspartate to form carbamoyl aspartate and inorganic phosphate, the committed step in the de novo pyrimidine nucleotide biosynthesis pathway. This chain is Aspartate carbamoyltransferase catalytic subunit, found in Leuconostoc mesenteroides subsp. mesenteroides (strain ATCC 8293 / DSM 20343 / BCRC 11652 / CCM 1803 / JCM 6124 / NCDO 523 / NBRC 100496 / NCIMB 8023 / NCTC 12954 / NRRL B-1118 / 37Y).